We begin with the raw amino-acid sequence, 117 residues long: Large ribosomal subunit protein bL20 (117 aa).

It belongs to the bacterial ribosomal protein bL20 family.

Its function is as follows. Binds directly to 23S ribosomal RNA and is necessary for the in vitro assembly process of the 50S ribosomal subunit. It is not involved in the protein synthesizing functions of that subunit. In Geobacter sulfurreducens (strain ATCC 51573 / DSM 12127 / PCA), this protein is Large ribosomal subunit protein bL20.